The primary structure comprises 282 residues: Pantothenate synthetase (282 aa).

Methionine 26 to histidine 33 serves as a coordination point for ATP. Histidine 33 serves as the catalytic Proton donor. Residue glutamine 57 participates in (R)-pantoate binding. Glutamine 57 is a binding site for beta-alanine. Glycine 144 to aspartate 147 provides a ligand contact to ATP. Glutamine 150 lines the (R)-pantoate pocket. ATP-binding positions include valine 173 and leucine 181–arginine 184.

It belongs to the pantothenate synthetase family. Homodimer.

It is found in the cytoplasm. The enzyme catalyses (R)-pantoate + beta-alanine + ATP = (R)-pantothenate + AMP + diphosphate + H(+). The protein operates within cofactor biosynthesis; (R)-pantothenate biosynthesis; (R)-pantothenate from (R)-pantoate and beta-alanine: step 1/1. Catalyzes the condensation of pantoate with beta-alanine in an ATP-dependent reaction via a pantoyl-adenylate intermediate. This chain is Pantothenate synthetase, found in Cupriavidus taiwanensis (strain DSM 17343 / BCRC 17206 / CCUG 44338 / CIP 107171 / LMG 19424 / R1) (Ralstonia taiwanensis (strain LMG 19424)).